Reading from the N-terminus, the 182-residue chain is CASP-like protein 5B1 (182 aa).

The interval 1 to 20 is disordered; the sequence is GDASHAVDHPIGGHPEHEHD. Over 1–41 the chain is Cytoplasmic; sequence GDASHAVDHPIGGHPEHEHDLREEEGPLIFPMKDLPGTPGT. A helical membrane pass occupies residues 42–62; it reads VGGLALRMGQFIFAAASVVIM. The Extracellular portion of the chain corresponds to 63-73; that stretch reads VTSDEFINFTA. N-linked (GlcNAc...) asparagine glycosylation is present at N70. Residues 74–94 traverse the membrane as a helical segment; it reads FCYLAAAMALQFLWSFVLATI. At 95–108 the chain is on the cytoplasmic side; sequence DVYALLIKRGLPNS. Residues 109 to 129 form a helical membrane-spanning segment; it reads ILLSLFVVGDWVTATLSLAAA. Topologically, residues 130–159 are extracellular; it reads CSTAGITVLFDKDLNYCDQMHCRRYQLSAT. A helical transmembrane segment spans residues 160-180; that stretch reads MAFFSWVLIAISSLITLLLLV. At 181–182 the chain is on the cytoplasmic side; sequence SE.

Belongs to the Casparian strip membrane proteins (CASP) family. As to quaternary structure, homodimer and heterodimers.

It is found in the cell membrane. The chain is CASP-like protein 5B1 from Picea sitchensis (Sitka spruce).